Consider the following 442-residue polypeptide: 3-phosphoshikimate 1-carboxyvinyltransferase (442 aa).

Positions 25, 26, and 30 each coordinate 3-phosphoshikimate. Lysine 25 is a phosphoenolpyruvate binding site. Residues glycine 97 and arginine 125 each contribute to the phosphoenolpyruvate site. 4 residues coordinate 3-phosphoshikimate: serine 170, glutamine 172, aspartate 323, and lysine 350. Residue glutamine 172 coordinates phosphoenolpyruvate. Aspartate 323 functions as the Proton acceptor in the catalytic mechanism. 2 residues coordinate phosphoenolpyruvate: arginine 354 and arginine 399.

It belongs to the EPSP synthase family. As to quaternary structure, monomer.

The protein resides in the cytoplasm. It carries out the reaction 3-phosphoshikimate + phosphoenolpyruvate = 5-O-(1-carboxyvinyl)-3-phosphoshikimate + phosphate. The protein operates within metabolic intermediate biosynthesis; chorismate biosynthesis; chorismate from D-erythrose 4-phosphate and phosphoenolpyruvate: step 6/7. In terms of biological role, catalyzes the transfer of the enolpyruvyl moiety of phosphoenolpyruvate (PEP) to the 5-hydroxyl of shikimate-3-phosphate (S3P) to produce enolpyruvyl shikimate-3-phosphate and inorganic phosphate. The polypeptide is 3-phosphoshikimate 1-carboxyvinyltransferase (Bartonella quintana (strain Toulouse) (Rochalimaea quintana)).